The following is a 125-amino-acid chain: Small ribosomal subunit protein uS12 (125 aa).

D89 carries the 3-methylthioaspartic acid modification.

Belongs to the universal ribosomal protein uS12 family. Part of the 30S ribosomal subunit. Contacts proteins S8 and S17. May interact with IF1 in the 30S initiation complex.

Its function is as follows. With S4 and S5 plays an important role in translational accuracy. Functionally, interacts with and stabilizes bases of the 16S rRNA that are involved in tRNA selection in the A site and with the mRNA backbone. Located at the interface of the 30S and 50S subunits, it traverses the body of the 30S subunit contacting proteins on the other side and probably holding the rRNA structure together. The combined cluster of proteins S8, S12 and S17 appears to hold together the shoulder and platform of the 30S subunit. This Bordetella petrii (strain ATCC BAA-461 / DSM 12804 / CCUG 43448) protein is Small ribosomal subunit protein uS12.